The following is a 654-amino-acid chain: Fructose-1,6-bisphosphatase class 3 (654 aa).

Residues 288 to 307 are disordered; that stretch reads NPAFKPKKRPDKHERLTQRE. Positions 298–307 are enriched in basic and acidic residues; it reads DKHERLTQRE.

It belongs to the FBPase class 3 family. It depends on Mn(2+) as a cofactor.

The catalysed reaction is beta-D-fructose 1,6-bisphosphate + H2O = beta-D-fructose 6-phosphate + phosphate. It participates in carbohydrate biosynthesis; gluconeogenesis. The sequence is that of Fructose-1,6-bisphosphatase class 3 from Staphylococcus aureus (strain MSSA476).